Reading from the N-terminus, the 882-residue chain is MTASRSPATDLPKSWDPPAAEYAIYRQWVDAGYFTANPASDKPGYSIVLPPPNVTGSLHMGHALEHTMMDALTRRKRMQGYEVLWQPGMDHAGIATQSVVEKQLAVDGKTKEDFGRELFIEKVWDWKRESGGAIGGQMRRLGDGVDWSRDRFTMDEGLSRAVRTIFKRLYDAGLIYRAERLVNWSPVLQTALSDIEVNYEEVEGELVSFRYGSLDDSGPHIVVATTRVETMLGDTAIAVHPDDERYRHLVGSSLPHPFVDRQLLIVADEHVDPEFGTGAVKVTPAHDPNDFEIGLRHQLPMISIMDTRGRIADTGTQFDGMDRFAARVAVREALAAQGRIVEEKRPYLHSVGHSERSGEPIEPRLSLQWWVRVESLAKAAGDAVRNGDTVIHPTSMEPRWFAWVDDMHDWCVSRQLWWGHRIPIWYGPNGEQRCVGPDETPPEGWEQDPDVLDTWFSSALWPFSTLGWPEKTPELEKFYPTSVLVTGYDILFFWVARMMMFGTFVGDDDAITLDGRRGPQVPFTDVFLHGLIRDESGRKMSKSKGNVIDPLDWVDMFGADALRFTLARGASPGGDLAIGEDHVRASRNFCTKLFNATRYALLNGAQLAELPPLDELTDADRWILGRLEEVRAEVDSAFDNYEFSRACESLYHFAWDEFCDWYVELAKTQLAEGITHTTAVLATTLDTLLRLLHPVIPFITEALWQALTGNESLVIADWPRSSGIDLDQVATQRITDMQKLVTEVRRFRSDQGLADRQKVPARLAGVTESDLDTQVSAVTSLAWLTDAGPDFRPSASVEVRLRGGTVVVELDTSGSIDVAAERRRLEKDLAAAHKELASTTAKLANEDFLAKAPPHVVDKIRDRQRLAQEESERINARLAVLQ.

The short motif at 52-62 (PNVTGSLHMGH) is the 'HIGH' region element. Positions 539–543 (KMSKS) match the 'KMSKS' region motif. Residue Lys542 participates in ATP binding. Positions 816-882 (IDVAAERRRL…RINARLAVLQ (67 aa)) form a coiled coil.

It belongs to the class-I aminoacyl-tRNA synthetase family. ValS type 1 subfamily. In terms of assembly, monomer.

It is found in the cytoplasm. It carries out the reaction tRNA(Val) + L-valine + ATP = L-valyl-tRNA(Val) + AMP + diphosphate. Functionally, catalyzes the attachment of valine to tRNA(Val). As ValRS can inadvertently accommodate and process structurally similar amino acids such as threonine, to avoid such errors, it has a 'posttransfer' editing activity that hydrolyzes mischarged Thr-tRNA(Val) in a tRNA-dependent manner. This is Valine--tRNA ligase from Mycolicibacterium paratuberculosis (strain ATCC BAA-968 / K-10) (Mycobacterium paratuberculosis).